The chain runs to 271 residues: MSQGYLPFPNIDPVFFSIGPISVRWYGLMYLFGFLFAMWLANRRADKPGSGWTREQVSDLLFAGFLGVVLGGRIGYVLFYNFDLFLADPIYLFKVWTGGMSFHGGLLGVITAMLWYAKKNGRTFFGVADFVAPLVPFGLGVGRLGNFMNGELWGRVTDVPWAMVFPTGGPLPRHPSQLYEMALEGVVLFFILNWFIRKPRPLGSVSGLFLAGYGTFRFLVEYVREPDAQLGLFGGFISMGQILSSPMIIGGLALMAWAYKRGHYQDKVTVK.

A run of 7 helical transmembrane segments spans residues 21 to 41, 60 to 80, 95 to 115, 124 to 144, 176 to 196, 203 to 223, and 230 to 250; these read ISVR…MWLA, LLFA…VLFY, VWTG…AMLW, FFGV…VGRL, SQLY…NWFI, GSVS…VEYV, and LGLF…MIIG. Residue Arg-143 coordinates a 1,2-diacyl-sn-glycero-3-phospho-(1'-sn-glycerol).

The protein belongs to the Lgt family.

It is found in the cell inner membrane. The catalysed reaction is L-cysteinyl-[prolipoprotein] + a 1,2-diacyl-sn-glycero-3-phospho-(1'-sn-glycerol) = an S-1,2-diacyl-sn-glyceryl-L-cysteinyl-[prolipoprotein] + sn-glycerol 1-phosphate + H(+). Its pathway is protein modification; lipoprotein biosynthesis (diacylglyceryl transfer). Functionally, catalyzes the transfer of the diacylglyceryl group from phosphatidylglycerol to the sulfhydryl group of the N-terminal cysteine of a prolipoprotein, the first step in the formation of mature lipoproteins. The chain is Phosphatidylglycerol--prolipoprotein diacylglyceryl transferase from Vibrio vulnificus (strain CMCP6).